The chain runs to 291 residues: 4-diphosphocytidyl-2-C-methyl-D-erythritol kinase (291 aa).

Lysine 11 is a catalytic residue. Residue 97-107 (PVAAGIGGGSS) coordinates ATP. Residue aspartate 139 is part of the active site.

Belongs to the GHMP kinase family. IspE subfamily.

It catalyses the reaction 4-CDP-2-C-methyl-D-erythritol + ATP = 4-CDP-2-C-methyl-D-erythritol 2-phosphate + ADP + H(+). The protein operates within isoprenoid biosynthesis; isopentenyl diphosphate biosynthesis via DXP pathway; isopentenyl diphosphate from 1-deoxy-D-xylulose 5-phosphate: step 3/6. In terms of biological role, catalyzes the phosphorylation of the position 2 hydroxy group of 4-diphosphocytidyl-2C-methyl-D-erythritol. The protein is 4-diphosphocytidyl-2-C-methyl-D-erythritol kinase of Methylorubrum extorquens (strain PA1) (Methylobacterium extorquens).